A 773-amino-acid polypeptide reads, in one-letter code: E3 ubiquitin-protein ligase msl-2 (773 aa).

Residues Cys41, Cys44, Cys59, His61, Cys64, Cys67, Cys78, and Cys84 each coordinate Zn(2+). An RING-type zinc finger spans residues 41-85 (CVVCCQLLVDPYSPKGKRCQHNVCRLCLRGKKHLFPSCTQCEGCS). Residues 424–468 (VQTELQDAESLQKDFEDAKAAAEEAKEKEKDLHAISAELQKEDSD) adopt a coiled-coil conformation. The disordered stretch occupies residues 460 to 525 (AELQKEDSDE…EKVKPPKPKC (66 aa)). In terms of domain architecture, CXC MSL2-type spans 520 to 571 (PPKPKCRCGISGSSNTLTTCRNSRCPCYKSYNSCAGCHCVCCKNPHKEDYVE). Zn(2+) is bound by residues Cys525, Cys527, Cys539, Cys544, Cys546, Cys553, Cys556, Cys558, and Cys561. The interval 571-773 (ESDEDDDLED…EEIMSGSDDL (203 aa)) is C-terminal disordered region (CTD). A compositionally biased stretch (acidic residues) spans 572–581 (SDEDDDLEDF). Residues 572-616 (SDEDDDLEDFEMPKDVPEPMTQSEEPVVAEPRQEENSMAPPDSSA) form a disordered region. The segment at 620–685 (LVPLNNLQQS…SLPQYAYIMP (66 aa)) is clamp-binding domain (CBD). Residues 650–708 (QGSKPLDPVTVGFTIRVQLQHTDGFGSLPQYAYIMPTIDPPNPPAPSLSPPPPPAPDRE) form a pro/Bas region region. Residues 687-704 (IDPPNPPAPSLSPPPPPA) show a composition bias toward pro residues. Residues 687-773 (IDPPNPPAPS…EEIMSGSDDL (87 aa)) form a disordered region. Positions 705–714 (PDREVIEPPA) are enriched in basic and acidic residues. A compositionally biased stretch (basic residues) spans 715–726 (KKFRTSRTRRGR). The segment covering 742–759 (GSRSNSAAGDRSSATDNA) has biased composition (polar residues).

This sequence belongs to the MSL2 family. In terms of assembly, component of the male-specific lethal (MSL) histone acetyltransferase complex, composed of mof, mle, msl-1, msl-2 and msl-3 proteins, as well as roX1 and roX2 non-coding RNAs. When not associated with chromatin, the MSL complex associates with msl-2 mRNAs, possibly to regulate the amount of available MSL complex. Interacts with Clamp; promoting cooperative binding to DNA PionX sites and recruitment of the MSL complex to chromatin. Post-translationally, autoubiquitinated.

Its subcellular location is the nucleus. It localises to the chromosome. The catalysed reaction is S-ubiquitinyl-[E2 ubiquitin-conjugating enzyme]-L-cysteine + [acceptor protein]-L-lysine = [E2 ubiquitin-conjugating enzyme]-L-cysteine + N(6)-ubiquitinyl-[acceptor protein]-L-lysine.. It functions in the pathway protein modification; protein ubiquitination. Its function is as follows. Limiting component of the male-specific lethal (MSL) histone acetyltransferase complex, a multiprotein complex essential for elevating transcription of the single X chromosome in the male (X chromosome dosage compensation). The MSL complex specifically associates with the single X chromosome in males and mediates formation of H4K16ac, promoting a two-fold activation of X chromosome. Msl-2 is only produced in males, constituting the limiting component of the MSL complex. Within the MSL complex, msl-2 mediates the selective binding to the X chromosome and recruitment of the MSL complex via two different mechanisms. Recognizes DNA motifs that are enriched on X chromosome, named PionX sites, which are characterized by sequence features and distinct DNA conformation (base roll). Specific recognition of the X chromosome is also mediated by the formation of a gel-like state: msl-2 undergoes liquid-liquid phase separation upon binding to roX1 and roX2 non-coding RNAs, leading to nucleate the MSL complex on the X chromosome. Msl-2 is also required for translation and/or stability of msl-1 in males. Also acts as an E3 ubiquitin ligase: in complex with msl-1, mediates ubiquitination of histone H2B at 'Lys-34' (H2BK34Ub). Also catalyzes ubiquitination of msl-1, msl-3 and mof components of the MSL complex. The chain is E3 ubiquitin-protein ligase msl-2 from Drosophila melanogaster (Fruit fly).